A 57-amino-acid polypeptide reads, in one-letter code: MKRQKRDKLGRAHSNGYQAGLGGKTKEQCPYQNIDAKSQWLGGWRDAISDRNLGLFK.

Positions 1-24 (MKRQKRDKLGRAHSNGYQAGLGGK) are disordered.

It belongs to the ribosome modulation factor family.

It localises to the cytoplasm. In terms of biological role, during stationary phase, converts 70S ribosomes to an inactive dimeric form (100S ribosomes). This Colwellia psychrerythraea (strain 34H / ATCC BAA-681) (Vibrio psychroerythus) protein is Ribosome modulation factor 2.